Consider the following 147-residue polypeptide: Hemoglobin subunit beta (147 aa).

N-acetylvaline is present on Val2. The Globin domain occupies His3–His147. Position 13 is a phosphothreonine (Thr13). Ser45 carries the post-translational modification Phosphoserine. An N6-acetyllysine modification is found at Lys60. His64 contributes to the heme b binding site. Position 83 is an N6-acetyllysine (Lys83). His93 is a heme b binding site. Cys94 carries the post-translational modification S-nitrosocysteine. Lys145 bears the N6-acetyllysine mark.

This sequence belongs to the globin family. In terms of assembly, heterotetramer of two alpha chains and two beta chains. In terms of tissue distribution, red blood cells.

Its function is as follows. Involved in oxygen transport from the lung to the various peripheral tissues. In Cheracebus torquatus (Collared titi monkey), this protein is Hemoglobin subunit beta (HBB).